A 472-amino-acid polypeptide reads, in one-letter code: Citrate synthase, mitochondrial (472 aa).

Residues His-308, His-354, and Asp-409 contribute to the active site.

This sequence belongs to the citrate synthase family. Homodimer.

The protein resides in the mitochondrion matrix. The catalysed reaction is oxaloacetate + acetyl-CoA + H2O = citrate + CoA + H(+). It functions in the pathway carbohydrate metabolism; tricarboxylic acid cycle; isocitrate from oxaloacetate: step 1/2. In Daucus carota (Wild carrot), this protein is Citrate synthase, mitochondrial (CS).